Here is a 296-residue protein sequence, read N- to C-terminus: Regulatory protein PchR (296 aa).

One can recognise an HTH araC/xylS-type domain in the interval 201 to 296 (HAARDLLVGA…RYGISPSEIR (96 aa)). 2 consecutive DNA-binding regions (H-T-H motif) follow at residues 218–239 (DTLA…RKVF) and 266–288 (VSTV…RKRY).

Functionally, positive activator of the genes for pyochelin and ferripyochelin receptors. This Pseudomonas aeruginosa (strain ATCC 15692 / DSM 22644 / CIP 104116 / JCM 14847 / LMG 12228 / 1C / PRS 101 / PAO1) protein is Regulatory protein PchR (pchR).